Here is a 333-residue protein sequence, read N- to C-terminus: Glycerol-3-phosphate dehydrogenase [NAD(P)+] (333 aa).

NADPH is bound by residues Trp11, Arg34, and Lys107. Residues Lys107, Gly136, and Ser138 each contribute to the sn-glycerol 3-phosphate site. Ala140 is an NADPH binding site. The sn-glycerol 3-phosphate site is built by Lys191, Asp244, Ser254, Arg255, and Asn256. Lys191 acts as the Proton acceptor in catalysis. Arg255 is a binding site for NADPH. Residues Ile279 and Glu281 each contribute to the NADPH site.

The protein belongs to the NAD-dependent glycerol-3-phosphate dehydrogenase family.

Its subcellular location is the cytoplasm. The enzyme catalyses sn-glycerol 3-phosphate + NAD(+) = dihydroxyacetone phosphate + NADH + H(+). It catalyses the reaction sn-glycerol 3-phosphate + NADP(+) = dihydroxyacetone phosphate + NADPH + H(+). It participates in membrane lipid metabolism; glycerophospholipid metabolism. Catalyzes the reduction of the glycolytic intermediate dihydroxyacetone phosphate (DHAP) to sn-glycerol 3-phosphate (G3P), the key precursor for phospholipid synthesis. The sequence is that of Glycerol-3-phosphate dehydrogenase [NAD(P)+] from Nitrosospira multiformis (strain ATCC 25196 / NCIMB 11849 / C 71).